The following is a 546-amino-acid chain: Chaperonin GroEL (546 aa).

ATP-binding positions include 30-33 (TLGP), Lys-51, 87-91 (DGTTT), Gly-415, and Asp-495.

This sequence belongs to the chaperonin (HSP60) family. As to quaternary structure, forms a cylinder of 14 subunits composed of two heptameric rings stacked back-to-back. Interacts with the co-chaperonin GroES.

Its subcellular location is the cytoplasm. It carries out the reaction ATP + H2O + a folded polypeptide = ADP + phosphate + an unfolded polypeptide.. Functionally, together with its co-chaperonin GroES, plays an essential role in assisting protein folding. The GroEL-GroES system forms a nano-cage that allows encapsulation of the non-native substrate proteins and provides a physical environment optimized to promote and accelerate protein folding. This chain is Chaperonin GroEL, found in Brucella ovis (strain ATCC 25840 / 63/290 / NCTC 10512).